Consider the following 745-residue polypeptide: Pentatricopeptide repeat-containing protein At1g71420 (745 aa).

PPR repeat units follow at residues Ser58–His88, Asn95–Arg125, Asn126–Asn160, Ser191–Lys224, Asn225–Phe259, Asp260–Ser296, Gln301–Cys332, Asp334–Pro367, Asp368–Ala402, Asp403–Ser437, Trp438–Asn464, Asp466–Lys496, and Gln502–Asp532. Positions Val537–Gly613 are type E motif. Residues Asn614–Lys644 are type E(+) motif. The type DYW motif stretch occupies residues Glu645–Trp745.

Belongs to the PPR family. PCMP-H subfamily.

The protein is Pentatricopeptide repeat-containing protein At1g71420 (PCMP-H70) of Arabidopsis thaliana (Mouse-ear cress).